A 293-amino-acid chain; its full sequence is MFALRTAARPAARSVGATRNYATLREIEMRLKSIKNIEKITNTMKIVASTKLGKAQRAMATSKVYNEASEKVFENSETAVPENIEKRLWVVVSSDKGLCGSIHSQLARTVRRKLLDFESGEKLIDIVAVGEKIKAQLGRSNPEQMRLSFGGTGKEAPTFEEAAHIADEILALDTQYDDIEIVYNKVLSGISFEPIMKESYSAKAIEDAPKFGQYELEDDVVKNLADFSLANTIYAAMAEGHAAEISARRNAMDNASKNASDMINKYSILYNRTRQAVITNELVDIITGASSLE.

The N-terminal 21 residues, 1-21, are a transit peptide targeting the mitochondrion; that stretch reads MFALRTAARPAARSVGATRNY.

In terms of assembly, F-type ATP synthases have 2 components, the catalytic core F(1) and the membrane-embedded component F(0), linked together by a central stalk and a peripheral stalk. The central stalk, also called rotor shaft, is often seen as part of F(1). The peripheral stalk is seen as part of F(0). F(0) contains the membrane channel next to the rotor. F-type ATP synthases form dimers but each monomer functions independently in ATP generation. The dimer consists of 17 different polypeptides: ATP1 (subunit alpha, 3 molecules per monomer, part of F(1)), ATP2 (subunit beta, 3 copies per monomer, part of F(1)), ATP3 (subunit gamma, part of the central stalk), ATP4 (subunit b, part of the peripheral stalk), ATP5/OSCP (subunit 5/OSCP, part of the peripheral stalk), ATP6 (subunit a, part of the peripheral stalk), ATP7 (subunit d, part of the peripheral stalk), ATP8 (subunit 8, part of the peripheral stalk), OLI1 (subunit c, part of the rotor, 10 molecules per monomer), ATP14 (subunit h, part of the peripheral stalk), ATP15 (subunit epsilon, part of the central stalk), ATP16 (subunit delta, part of the central stalk), ATP17 (subunit f, part of the peripheral stalk), ATP18 (subunit i/j, part of the peripheral stalk), ATP19 (subunit k, dimer-specific, at interface between monomers), ATP20 (subunit g, at interface between monomers), TIM11 (subunit e, at interface between monomers).

The protein resides in the mitochondrion inner membrane. In terms of biological role, mitochondrial membrane ATP synthase (F(1)F(0) ATP synthase or Complex V) produces ATP from ADP in the presence of a proton gradient across the membrane which is generated by electron transport complexes of the respiratory chain. F-type ATP synthases consist of two structural domains, F(1) - containing the extramembraneous catalytic core, and F(0) - containing the membrane proton channel, linked together by a central stalk and a peripheral stalk. During catalysis, ATP synthesis in the catalytic domain of F(1) is coupled via a rotary mechanism of the central stalk subunits to proton translocation. Part of the complex F(1) domain and the central stalk which is part of the complex rotary element. The gamma/ATP3 subunit protrudes into the catalytic domain formed of alpha/ATP1(3)beta/ATP2(3). Rotation of the central stalk against the surrounding alpha/ATP1(3)beta/ATP2(3) subunits leads to hydrolysis of ATP in three separate catalytic sites on the beta/ATP2 subunits. The polypeptide is ATP synthase subunit gamma, mitochondrial (Yarrowia lipolytica (strain CLIB 122 / E 150) (Yeast)).